A 69-amino-acid polypeptide reads, in one-letter code: DNA-directed RNA polymerase subunit omega (69 aa).

The protein belongs to the RNA polymerase subunit omega family. In terms of assembly, the RNAP catalytic core consists of 2 alpha, 1 beta, 1 beta' and 1 omega subunit. When a sigma factor is associated with the core the holoenzyme is formed, which can initiate transcription.

The catalysed reaction is RNA(n) + a ribonucleoside 5'-triphosphate = RNA(n+1) + diphosphate. Promotes RNA polymerase assembly. Latches the N- and C-terminal regions of the beta' subunit thereby facilitating its interaction with the beta and alpha subunits. The sequence is that of DNA-directed RNA polymerase subunit omega from Pediococcus pentosaceus (strain ATCC 25745 / CCUG 21536 / LMG 10740 / 183-1w).